We begin with the raw amino-acid sequence, 89 residues long: Large ribosomal subunit protein bL27 (89 aa).

Residues 1–22 (MAHKKAGGSSRNGRDSAGRRLG) form a disordered region.

The protein belongs to the bacterial ribosomal protein bL27 family.

The sequence is that of Large ribosomal subunit protein bL27 from Dinoroseobacter shibae (strain DSM 16493 / NCIMB 14021 / DFL 12).